We begin with the raw amino-acid sequence, 398 residues long: 8-amino-7-oxononanoate synthase (398 aa).

Substrate is bound at residue Arg26. A pyridoxal 5'-phosphate-binding site is contributed by 113–114 (GF). Substrate is bound at residue His138. Residues Ser181, His209, and Thr238 each coordinate pyridoxal 5'-phosphate. An N6-(pyridoxal phosphate)lysine modification is found at Lys241. Substrate is bound at residue Thr355.

It belongs to the class-II pyridoxal-phosphate-dependent aminotransferase family. BioF subfamily. Homodimer. Pyridoxal 5'-phosphate is required as a cofactor.

It carries out the reaction 6-carboxyhexanoyl-[ACP] + L-alanine + H(+) = (8S)-8-amino-7-oxononanoate + holo-[ACP] + CO2. The protein operates within cofactor biosynthesis; biotin biosynthesis. Catalyzes the decarboxylative condensation of pimeloyl-[acyl-carrier protein] and L-alanine to produce 8-amino-7-oxononanoate (AON), [acyl-carrier protein], and carbon dioxide. The polypeptide is 8-amino-7-oxononanoate synthase (Aeromonas hydrophila subsp. hydrophila (strain ATCC 7966 / DSM 30187 / BCRC 13018 / CCUG 14551 / JCM 1027 / KCTC 2358 / NCIMB 9240 / NCTC 8049)).